The chain runs to 226 residues: PKHD-type hydroxylase Nwi_0701 (226 aa).

The region spanning 78 to 178 (KVLPPRFNRY…RLAAFFWTQS (101 aa)) is the Fe2OG dioxygenase domain. Residues histidine 96, aspartate 98, and histidine 159 each coordinate Fe cation. Arginine 169 contacts 2-oxoglutarate.

Requires Fe(2+) as cofactor. The cofactor is L-ascorbate.

In Nitrobacter winogradskyi (strain ATCC 25391 / DSM 10237 / CIP 104748 / NCIMB 11846 / Nb-255), this protein is PKHD-type hydroxylase Nwi_0701.